Here is a 2036-residue protein sequence, read N- to C-terminus: Transmembrane channel-like protein (2036 aa).

Disordered stretches follow at residues 1–178 (MQND…IDDE) and 194–243 (SVRG…ESTQ). Residues 1 to 353 (MQNDEEPAAA…GVASYFTFLR (353 aa)) lie on the Cytoplasmic side of the membrane. Low complexity predominate over residues 58–73 (VGSSSSNGNTSNVATG). Positions 74–90 (ANSENNSGVTSPHQLSV) are enriched in polar residues. Basic and acidic residues predominate over residues 125–134 (ASQEDHRSYE). The segment covering 166–178 (FDEDGGGGDIDDE) has biased composition (acidic residues). Over residues 198–208 (YRGKRGSRSSR) the composition is skewed to basic residues. Over residues 216 to 225 (HVLDSVERRR) the composition is skewed to basic and acidic residues. The span at 227-243 (SVYTTSSEEGTNQESTQ) shows a compositional bias: polar residues. A helical membrane pass occupies residues 354–374 (WLMWVNIMIAIPLVAFVIGPE). Over 375–395 (YFATKHGETDPRKRMSDPEAR) the chain is Extracellular. The helical transmembrane segment at 396 to 418 (VAGNLFTFWEFEGYLKYSPMFYG) threads the bilayer. Topologically, residues 419-432 (YYSSTSGISTSGYK) are cytoplasmic. The helical transmembrane segment at 433-453 (LPLAYFLTAVLVYIYSFVATL) threads the bilayer. Residues 454 to 526 (RKMAENSRNS…NRNWRVILQR (73 aa)) lie on the Extracellular side of the membrane. A helical membrane pass occupies residues 527–547 (ILVNILVMGLLGLSGATVVLL). Topologically, residues 548–567 (VNHSEDLAKHDNWLSRNAVN) are cytoplasmic. Residues 568 to 588 (VTMTLLSFFLPMIFEALGLFE) traverse the membrane as a helical segment. Topologically, residues 589–599 (NWHPRQQLRLQ) are extracellular. The chain crosses the membrane as a helical span at residues 600–620 (LARIMILNMLNLYSLMFSFIY). Topologically, residues 621–1308 (KINSKEKPLQ…ILTLINNQGQ (688 aa)) are cytoplasmic. Disordered regions lie at residues 789 to 839 (TTAT…TEAT), 860 to 967 (KPLG…TDQA), 996 to 1027 (FFTSKYSRRHRNESAVSAGQPRETTESVNATP), 1066 to 1143 (LRGR…EGSE), and 1186 to 1205 (GSTTESPDSTTQSSDSKQLT). Over residues 870–885 (IPNSTTNSATLSTIPA) the composition is skewed to polar residues. Low complexity predominate over residues 886–906 (TLNTTNLPLNSTTKLTTTTST). A compositionally biased stretch (polar residues) spans 933 to 952 (TSDAPDNNSYSDITDYSSEP). Residues 953 to 967 (SEIEDFDEQESTDQA) are compositionally biased toward acidic residues. Low complexity-rich tracts occupy residues 1069 to 1083 (RITTTTSTSTTSTTT), 1091 to 1100 (RTTTTELTST), and 1107 to 1130 (TTESSTDSSSPGSTTNAFDSSSST). The chain crosses the membrane as a helical span at residues 1309–1329 (VWMGIFFSPGLVLINLVKLMI). Residues 1330 to 1358 (MMYFRSWIVLTCNVPHEVVFKASKSNNFY) are Extracellular-facing. A helical transmembrane segment spans residues 1359-1379 (LSLLLTMLFLCVLPVGYAIVW). Over 1380-1423 (LRPSWHCGPFSEYNRIAEFITNTTRNALPKQLHEPLDYLTSSST) the chain is Cytoplasmic. Residues 1424–1444 (VIPLLLLLILIIYYLVSLTGA) form a helical membrane-spanning segment. Over 1445 to 2036 (LREANQDLRT…RIDIENEHEK (592 aa)) the chain is Extracellular. Disordered regions lie at residues 1527–1572 (LRKG…SRLQ), 1592–1841 (ERAR…SRQG), and 1859–1990 (KKDD…IPTI). 5 stretches are compositionally biased toward basic and acidic residues: residues 1538 to 1566 (SFVRRDDDDTDTEHQDSLPHDEEAKDKRF), 1614 to 1640 (KETHPKSRFKVEKHERKDRGSMKDKKD), 1658 to 1668 (SPKDNEHDPDT), 1727 to 1743 (HIVDEKKPPPHEVEDKP), and 1777 to 1793 (PEPEVFKFDERSVERSS). A compositionally biased stretch (polar residues) spans 1806 to 1838 (NEPSGTEEQDRSLPSPTPSQGQGHHQRQLSVLS). Residues 1890–1899 (VLSSVSSSTA) are compositionally biased toward low complexity. Positions 1903–1914 (PPTPEPESPTPS) are enriched in pro residues. Over residues 1976–1990 (QDSQSSIWSDNIPTI) the composition is skewed to polar residues.

Belongs to the TMC family. In terms of tissue distribution, expressed in multi-dendritic neurons of the labellum (md-L), which extend elaborate dendritic arbors innervating the bases of taste hairs (at protein level). In larvae, expressed in class I and class II dendritic arborization (da) neurons and bipolar dendrite (bd) neurons (at protein level). In adults, expressed in various sensory neurons including those in the mouth parts, olfactory neurons in the antenna, wing bristle neurons, haltere neurons, arista neurons, and many other sensory neurons, including a subset of chordotonal (Cho) neurons. Expressed in md-L axon terminals, including those that project into the subesophageal zone (SEZ). Also expressed in a small number of local neurons in the adult ventral nerve cord (VNC), and projections extending from a few neurons in the legs or wing hinges. In the adult mouth, expressed in a few multi-dendritic neurons of the ventral cibarial sensory organ (VCSO); the multiple elaborate dendritic branches form a brush-like structure that faces the luminal side of the food-passing tunnel. Also expressed in the oviduct and uterus of adult females.

Its subcellular location is the cell membrane. It is found in the cell projection. The protein localises to the dendrite. Functionally, probable ion channel. Component of mechanosensitive neurons that participates in proprioception, sensing food texture, and directing egg-laying site selection (oviposition). Component of multi-dendritic neurons of the labellum (md-L) where it is required for sensing the hardness and viscosity of their food, enabling them to behaviorally discriminate their preferred softness and smoothness from harder and stickier food options. Required as part of oviposition site selection process to relay mechanosensory and chemosensory information on the hardness and sweetness of potential egg-laying substrates, thus ensuring females select the most optimal site for their eggs survival. Females determine the softest substrate for their eggs first by making a coarse evaluation of substrate hardness using mechanosensitive channels nan and Piezo in the leg tarsal bristles, followed by a much finer assessment using nan, iav and Tmc mechanosensitive channels on the labellum. This protein is required to sense subtle differences in substrate stiffness (between 0.25% and 0.3% agarose), likely acting in the md-L neurons. Also required in neurons on the labellum, including the md-Ls, and possibly in the brain, to inhibit discrimination of egg-laying substrates of different hardness if the substrate contains sucrose. During oviposition evaluation, activation of sweet neurons by sucrose enhances the activity of the Tmc neurons resulting in females losing their softness preference in favor of egg-laying sites that contain sucrose. Acts in the larvae peripheral sensory neurons, to contribute to proprioception and sensory feedback for normal forward crawling behavior. Required for the normal activity of the proprioceptive sensory dendrites, ddaE which show preferential responses to forward locomotion, and ddaD which show preferential responses to backward locomotion. This chain is Transmembrane channel-like protein, found in Drosophila melanogaster (Fruit fly).